A 190-amino-acid chain; its full sequence is UPF0200 protein OE_4442F (190 aa).

Position 8–15 (8–15) interacts with ATP; that stretch reads GMPGSGKS. The segment at 120 to 144 is disordered; it reads ARIEDRDRPGDTDGEPLDAREDRER.

Belongs to the UPF0200 family.

This is UPF0200 protein OE_4442F from Halobacterium salinarum (strain ATCC 29341 / DSM 671 / R1).